The sequence spans 209 residues: LexA repressor (209 aa).

The H-T-H motif DNA-binding region spans 32-52 (VREIGKAVDLSSTSTVHGHLA). Catalysis depends on for autocatalytic cleavage activity residues Ser131 and Lys169.

This sequence belongs to the peptidase S24 family. Homodimer.

It catalyses the reaction Hydrolysis of Ala-|-Gly bond in repressor LexA.. In terms of biological role, represses a number of genes involved in the response to DNA damage (SOS response), including recA and lexA. In the presence of single-stranded DNA, RecA interacts with LexA causing an autocatalytic cleavage which disrupts the DNA-binding part of LexA, leading to derepression of the SOS regulon and eventually DNA repair. The chain is LexA repressor from Enterococcus faecalis (strain ATCC 700802 / V583).